Reading from the N-terminus, the 1385-residue chain is L-2-aminoadipate reductase large subunit (1385 aa).

One can recognise a Carrier domain in the interval 843-920 (SSFSPLEQEI…ELAKEISRVR (78 aa)). Ser-880 carries the post-translational modification O-(pantetheine 4'-phosphoryl)serine.

Belongs to the ATP-dependent AMP-binding enzyme family. As to quaternary structure, heterodimer of an alpha and a beta subunit. Pantetheine 4'-phosphate serves as cofactor.

The enzyme catalyses (S)-2-amino-6-oxohexanoate + NADP(+) + H2O = L-2-aminoadipate + NADPH + 2 H(+). The catalysed reaction is (S)-2-amino-6-oxohexanoate + NAD(+) + H2O = L-2-aminoadipate + NADH + 2 H(+). It catalyses the reaction (S)-2-amino-6-oxohexanoate + AMP + diphosphate + NADP(+) = L-2-aminoadipate + ATP + NADPH + H(+). It functions in the pathway amino-acid biosynthesis; L-lysine biosynthesis via AAA pathway; L-lysine from L-alpha-aminoadipate (fungal route): step 1/3. Catalyzes the activation of alpha-aminoadipate by ATP-dependent adenylation and the reduction of activated alpha-aminoadipate by NADPH. The activated alpha-aminoadipate is bound to the phosphopantheinyl group of the enzyme itself before it is reduced to (S)-2-amino-6-oxohexanoate. This Eremothecium gossypii (strain ATCC 10895 / CBS 109.51 / FGSC 9923 / NRRL Y-1056) (Yeast) protein is L-2-aminoadipate reductase large subunit (LYS2).